A 603-amino-acid polypeptide reads, in one-letter code: NADH-ubiquinone oxidoreductase chain 5 (603 aa).

16 helical membrane passes run 4-24, 38-58, 87-107, 117-137, 140-160, 171-191, 211-233, 241-261, 273-293, 301-320, 331-351, 366-386, 409-429, 457-477, 488-508, and 583-603; these read LPTLTLISLIILTSPIMLSPL, MAVSYAFMVSMVPAMIFMHSG, LIFMPVALFVTWSIMEFSLWY, FFKYLLLFLITMIILITANNL, LFIGWEGVGIMSFLLIGWWYG, AMIYNRIGDVGFVAAMAWFLL, LPLTGLLLAAMGKSAQFGLHPWL, TPVSALLHSSTMVVAGVFLLI, ILTLTLCVGAITTLFTAICAL, IIAFSTSSQLGLMMVTIGIN, THAFFKAMLFMCSGSIIHSLG, LPFTTTALIIGSLALTGMPFL, LLITFIATSMTAVYSTRIIFF, LMLGSIFAGFLISSNLPPTTV, FMALAVTLLGFALAIELSSFT, and MIKLYFLSFLISLTLGLLLII.

Belongs to the complex I subunit 5 family.

Its subcellular location is the mitochondrion inner membrane. The enzyme catalyses a ubiquinone + NADH + 5 H(+)(in) = a ubiquinol + NAD(+) + 4 H(+)(out). In terms of biological role, core subunit of the mitochondrial membrane respiratory chain NADH dehydrogenase (Complex I) that is believed to belong to the minimal assembly required for catalysis. Complex I functions in the transfer of electrons from NADH to the respiratory chain. The immediate electron acceptor for the enzyme is believed to be ubiquinone. The sequence is that of NADH-ubiquinone oxidoreductase chain 5 (MT-ND5) from Dugong dugon (Dugong).